The following is a 277-amino-acid chain: MDSDSLHYSLDLAAANGLTLSSEQRAALQSSLLIVKRNYKFSRVLFWGKILGIKSDYFIAQGVEDDELKNRKSLYSLNCVDWHLLPPATESMIADVALAATGRFTGDPSHEYEHTEIRTEGEGDEATHEEVTVKVIEASRLAAIVSNIDKDVSVVPRGAFIKSPNGKVQTNRSFGGLHPTEAAKLRNYLHFREPVNLRNKSILEMSELNPALDFLDPLSEDILKGSWSLQLDRGGTVCVLRSLLWLGFTFFHVPQTPQHGYIYMGDGLMNLDLPFML.

It belongs to the flagellar radial spoke RSP9 family. In terms of assembly, component of axonemal radial spoke complexes.

The protein localises to the cytoplasm. The protein resides in the cytoskeleton. Its subcellular location is the cilium axoneme. It localises to the flagellum axoneme. It is found in the cell projection. The protein localises to the kinocilium. Functionally, functions as part of axonemal radial spoke complexes that play an important part in the motility of sperm and cilia. Required for motility of olfactory and neural cilia and for the structural integrity of ciliary axonemes in both 9+0 and 9+2 motile cilia. Essential for both the radial spoke head assembly and the central pair microtubule stability in ependymal motile cilia. The protein is Radial spoke head protein 9 homolog (rsph9) of Danio rerio (Zebrafish).